Reading from the N-terminus, the 192-residue chain is Apoptosis regulator BAX (192 aa).

Met-1 bears the N-acetylmethionine mark. The BH3 signature appears at 59–73 (LSECLKRIGDELDSN). The BH1 signature appears at 98-118 (DMFSDGNFNWGRVVALFYFAS). Lys-128 is covalently cross-linked (Glycyl lysine isopeptide (Lys-Gly) (interchain with G-Cter in ubiquitin)). The BH2 signature appears at 150 to 165 (GWIQDQGGWDGLLSYF). Residues 172–192 (TVTIFVAGVLTASLTIWKKMG) form a helical membrane-spanning segment. Lys-190 is covalently cross-linked (Glycyl lysine isopeptide (Lys-Gly) (interchain with G-Cter in ubiquitin)).

This sequence belongs to the Bcl-2 family. As to quaternary structure, homodimer. Forms higher oligomers under stress conditions. Forms heterooligomers with BAK. Interacts with BCL2L11. Interaction with BCL2L11 promotes BAX oligomerization and association with mitochondrial membranes, with subsequent release of cytochrome c. Forms heterodimers with BCL2, BCL2L1 isoform Bcl-X(L), BCL2L2, MCL1 and A1. Interacts with SH3GLB1. Interacts with humanin; forms fibers with humanin which results in BAX conformational changes and sequestering of BAX into the fibers, preventing BAX activation. Interacts with SFN and YWHAZ; the interaction occurs in the cytoplasm. Under stress conditions, JNK-mediated phosphorylation of SFN and YWHAZ, releases BAX to mitochondria. Interacts with RNF144B, which regulates the ubiquitin-dependent stability of BAX. Interacts with CLU under stress conditions that cause a conformation change leading to BAX oligomerization and association with mitochondria. Does not interact with CLU in unstressed cells. Interacts with FAIM2/LFG2. Interacts with RTL10/BOP. Interacts (via a C-terminal 33 residues) with NOL3 (via CARD domain); inhibits BAX activation and translocation and consequently cytochrome c release from mitochondria. Interacts with GIMAP3/IAN4 and GIMAP5/IAN5; this interaction is increased, when cells initiate apoptosis upon IL2 withdrawal. Interacts with IRF3; the interaction is direct, increases upon Sendai virus infection and mediates the formation of the apoptosis complex TOMM70:HSP90AA1:IRF3:BAX. Interacts with MOAP1, facilitating BAX-dependent mitochondrial outer membrane permeabilization and apoptosis. Interacts with BCL2L10/BCL-B. Interacts with non-acetylated XRCC6/Ku70; this interaction leads to BAX sequestration in the cytosol, away from the mitochondria, preventing BAX-mediated apoptosis. Interacts with BCL2A1 and BCL2L1 isoform Bcl-X(L). In terms of assembly, (Microbial infection) Interacts with adenovirus E1B 19K protein; this interaction blocks BAX oligomerization. As to quaternary structure, (Microbial infection) Interacts with human cytomegalovirus/HHV-5 protein vMIA/UL37. (Microbial infection) Interacts with enterovirus protein 2B; this interaction activates BAX-induced apoptosis. Ubiquitinated in the absence of XRCC6/Ku70. Ubiquitination promotes protein degradation. Ubiquitinated on Lys-128 and Lys-190. 'Lys-63'-linked polyubiquitin chains on Lys-128 are removed by USP12. As to expression, expressed in a wide variety of tissues. Isoform Psi is found in glial tumors. Isoform Alpha is expressed in spleen, breast, ovary, testis, colon and brain, and at low levels in skin and lung. Isoform Sigma is expressed in spleen, breast, ovary, testis, lung, colon, brain and at low levels in skin. Isoform Alpha and isoform Sigma are expressed in pro-myelocytic leukemia, histiocytic lymphoma, Burkitt's lymphoma, T-cell lymphoma, lymphoblastic leukemia, breast adenocarcinoma, ovary adenocarcinoma, prostate carcinoma, prostate adenocarcinoma, lung carcinoma, epidermoid carcinoma, small cell lung carcinoma and colon adenocarcinoma cell lines.

It localises to the mitochondrion outer membrane. It is found in the cytoplasm. Its subcellular location is the nucleus. In terms of biological role, plays a role in the mitochondrial apoptotic process. Under normal conditions, BAX is largely cytosolic via constant retrotranslocation from mitochondria to the cytosol mediated by BCL2L1/Bcl-xL, which avoids accumulation of toxic BAX levels at the mitochondrial outer membrane (MOM). Under stress conditions, undergoes a conformation change that causes translocation to the mitochondrion membrane, leading to the release of cytochrome c that then triggers apoptosis. Promotes activation of CASP3, and thereby apoptosis. In Homo sapiens (Human), this protein is Apoptosis regulator BAX (BAX).